The sequence spans 133 residues: Large ribosomal subunit protein uL15 (133 aa).

Residues 1–64 (MGLENLKPAK…QPLQRRLPKI (64 aa)) are disordered.

The protein belongs to the universal ribosomal protein uL15 family. Part of the 50S ribosomal subunit.

In terms of biological role, binds to the 23S rRNA. This Helicobacter pylori (strain G27) protein is Large ribosomal subunit protein uL15.